The chain runs to 93 residues: Uteroglobin (93 aa).

An N-terminal signal peptide occupies residues 1–17; the sequence is MKLAITIILVMLSVCYS.

This sequence belongs to the secretoglobin family. In terms of assembly, antiparallel homodimer; disulfide-linked. Interaction with LMBR1L is controversial.

Its subcellular location is the secreted. Functionally, binds phosphatidylcholine, phosphatidylinositol, polychlorinated biphenyls (PCB) and weakly progesterone, potent inhibitor of phospholipase A2. The sequence is that of Uteroglobin (SCGB1A1) from Neotomodon alstoni (Mexican volcano mouse).